Reading from the N-terminus, the 499-residue chain is DNA-directed RNA polymerase subunit Rpo2N (499 aa).

Belongs to the RNA polymerase beta chain family. In terms of assembly, part of the RNA polymerase complex.

The protein localises to the cytoplasm. It catalyses the reaction RNA(n) + a ribonucleoside 5'-triphosphate = RNA(n+1) + diphosphate. DNA-dependent RNA polymerase (RNAP) catalyzes the transcription of DNA into RNA using the four ribonucleoside triphosphates as substrates. The Rpo2 subunit (Rpo2N and Rpo2C in this organism) is implicated in DNA promoter recognition and in nucleotide binding. This is DNA-directed RNA polymerase subunit Rpo2N from Methanococcus vannielii (strain ATCC 35089 / DSM 1224 / JCM 13029 / OCM 148 / SB).